Consider the following 406-residue polypeptide: 4-O-methyl-glucuronoyl methylesterase (406 aa).

The N-terminal stretch at 1–17 (MAFRWLSFLLLALPVLA) is a signal peptide. A disulfide bond links cysteine 31 and cysteine 64. N-linked (GlcNAc...) asparagine glycosylation is found at asparagine 100, asparagine 110, asparagine 122, and asparagine 178. A GXSYXG catalytic site motif motif is present at residues 215–220 (GCSRDG). Cystine bridges form between cysteine 216–cysteine 352 and cysteine 248–cysteine 324. The active-site Nucleophile is serine 217. Positions 221, 263, and 271 each coordinate substrate. N-linked (GlcNAc...) asparagine glycosylation is present at asparagine 285. Tryptophan 315 is a binding site for substrate. Residue asparagine 348 is glycosylated (N-linked (GlcNAc...) asparagine). Histidine 351 (proton donor/acceptor) is an active-site residue. Residues asparagine 376, asparagine 387, and asparagine 398 are each glycosylated (N-linked (GlcNAc...) asparagine).

It belongs to the carbohydrate esterase 15 (CE15) family.

Its subcellular location is the secreted. The enzyme catalyses a 4-O-methyl-alpha-D-glucuronosyl ester derivative + H2O = 4-O-methyl-alpha-D-glucuronate derivative + an alcohol + H(+). Functionally, glucuronoyl esterase which may play a significant role in biomass degradation, as it is considered to disconnect hemicellulose from lignin through the hydrolysis of the ester bond between 4-O-methyl-D-glucuronic acid residues of glucuronoxylans and aromatic alcohols of lignin. The chain is 4-O-methyl-glucuronoyl methylesterase from Phanerochaete carnosa (strain HHB-10118-sp) (White-rot fungus).